Consider the following 211-residue polypeptide: Holliday junction branch migration complex subunit RuvA (211 aa).

Residues 1–70 form a domain I region; that stretch reads MIQFLQGQVV…QDQIALFGFG (70 aa). Residues 71 to 149 form a domain II region; sequence RLAERDLFGQ…QWHKLQMGTG (79 aa). Residues 150–158 form a flexible linker region; it reads ETDSTLPTT. The tract at residues 158–211 is domain III; the sequence is TALLEDLEMTLLALGYTQTEIQQAIAMVSQVPDVAQSEDPEVWIRQAIGWLSDH.

The protein belongs to the RuvA family. Homotetramer. Forms an RuvA(8)-RuvB(12)-Holliday junction (HJ) complex. HJ DNA is sandwiched between 2 RuvA tetramers; dsDNA enters through RuvA and exits via RuvB. An RuvB hexamer assembles on each DNA strand where it exits the tetramer. Each RuvB hexamer is contacted by two RuvA subunits (via domain III) on 2 adjacent RuvB subunits; this complex drives branch migration. In the full resolvosome a probable DNA-RuvA(4)-RuvB(12)-RuvC(2) complex forms which resolves the HJ.

The protein resides in the cytoplasm. Its function is as follows. The RuvA-RuvB-RuvC complex processes Holliday junction (HJ) DNA during genetic recombination and DNA repair, while the RuvA-RuvB complex plays an important role in the rescue of blocked DNA replication forks via replication fork reversal (RFR). RuvA specifically binds to HJ cruciform DNA, conferring on it an open structure. The RuvB hexamer acts as an ATP-dependent pump, pulling dsDNA into and through the RuvAB complex. HJ branch migration allows RuvC to scan DNA until it finds its consensus sequence, where it cleaves and resolves the cruciform DNA. The chain is Holliday junction branch migration complex subunit RuvA from Synechocystis sp. (strain ATCC 27184 / PCC 6803 / Kazusa).